Here is a 404-residue protein sequence, read N- to C-terminus: Cysteine desulfurase IscS (404 aa).

Pyridoxal 5'-phosphate is bound by residues 75-76 (AT), Asn-155, Gln-183, and 203-205 (SAH). Lys-206 is modified (N6-(pyridoxal phosphate)lysine). Pyridoxal 5'-phosphate is bound at residue Thr-243. Cys-328 serves as the catalytic Cysteine persulfide intermediate. A [2Fe-2S] cluster-binding site is contributed by Cys-328.

Belongs to the class-V pyridoxal-phosphate-dependent aminotransferase family. NifS/IscS subfamily. As to quaternary structure, homodimer. Forms a heterotetramer with IscU, interacts with other sulfur acceptors. The cofactor is pyridoxal 5'-phosphate.

It is found in the cytoplasm. The enzyme catalyses (sulfur carrier)-H + L-cysteine = (sulfur carrier)-SH + L-alanine. Its pathway is cofactor biosynthesis; iron-sulfur cluster biosynthesis. Functionally, master enzyme that delivers sulfur to a number of partners involved in Fe-S cluster assembly, tRNA modification or cofactor biosynthesis. Catalyzes the removal of elemental sulfur atoms from cysteine to produce alanine. Functions as a sulfur delivery protein for Fe-S cluster synthesis onto IscU, an Fe-S scaffold assembly protein, as well as other S acceptor proteins. This is Cysteine desulfurase IscS from Buchnera aphidicola subsp. Acyrthosiphon pisum (strain 5A).